The sequence spans 141 residues: Hemoglobin subunit alpha-1/2 (141 aa).

One can recognise a Globin domain in the interval 1–141 (VLSAABKSBV…VSTVLTSKYR (141 aa)). At serine 3 the chain carries Phosphoserine. Residues lysine 7 and lysine 11 each carry the N6-succinyllysine modification. N6-acetyllysine; alternate is present on lysine 16. At lysine 16 the chain carries N6-succinyllysine; alternate. Tyrosine 24 carries the post-translational modification Phosphotyrosine. The residue at position 35 (serine 35) is a Phosphoserine. Lysine 40 is subject to N6-succinyllysine. At serine 49 the chain carries Phosphoserine. Position 58 (histidine 58) interacts with O2. A heme b-binding site is contributed by histidine 87. Serine 102 carries the phosphoserine modification. Threonine 108 is subject to Phosphothreonine. The residue at position 124 (serine 124) is a Phosphoserine. 2 positions are modified to phosphothreonine: threonine 134 and threonine 137. Serine 138 bears the Phosphoserine mark.

Belongs to the globin family. As to quaternary structure, heterotetramer of two alpha chains and two beta chains. As to expression, red blood cells.

Functionally, involved in oxygen transport from the lung to the various peripheral tissues. The protein is Hemoglobin subunit alpha-1/2 of Odocoileus virginianus virginianus (Virginia white-tailed deer).